Consider the following 713-residue polypeptide: Phospholipase A1 PLIP2, chloroplastic (713 aa).

A chloroplast-targeting transit peptide spans 1–32 (MDSLCLNSGLHGVIPAITAVGNGGCGGVVEVR). Disordered stretches follow at residues 118–140 (WKHE…DEEV) and 232–261 (ALKA…EKNK). Positions 122–140 (EEEDDDEVEDEDGDEDEEV) are enriched in acidic residues. Residues 426–430 (GHSLG) carry the GXSXG motif. The active-site Acyl-ester intermediate is S428. Residues D489 and H608 each act as charge relay system in the active site.

The protein belongs to the AB hydrolase superfamily. Lipase family.

It localises to the plastid. Its subcellular location is the chloroplast membrane. The protein localises to the chloroplast stroma. The enzyme catalyses a 1,2-diacyl-3-O-(beta-D-galactosyl)-sn-glycerol + 2 H2O = 3-beta-D-galactosyl-sn-glycerol + 2 a fatty acid + 2 H(+). The catalysed reaction is a 1,2-diacyl-sn-glycero-3-phosphocholine + H2O = a 2-acyl-sn-glycero-3-phosphocholine + a fatty acid + H(+). It catalyses the reaction 1-hexadecanoyl-2-(9Z-octadecenoyl)-sn-glycero-3-phosphocholine + H2O = 2-(9Z-octadecenoyl)-sn-glycero-3-phosphocholine + hexadecanoate + H(+). It carries out the reaction 1,2-di-(9Z-octadecenoyl)-sn-glycero-3-phosphocholine + H2O = 2-(9Z-octadecenoyl)-sn-glycero-3-phosphocholine + (9Z)-octadecenoate + H(+). The enzyme catalyses 1-octadecanoyl-2-(9Z-octadecenoyl)-sn-glycero-3-phosphocholine + H2O = 2-(9Z-octadecenoyl)-sn-glycero-3-phosphocholine + octadecanoate + H(+). The catalysed reaction is 1-octadecanoyl-2-(9Z,12Z)-octadecadienoyl-sn-glycero-3-phosphocholine + H2O = 2-(9Z,12Z-octadecadienoyl)-sn-glycero-3-phosphocholine + octadecanoate + H(+). It catalyses the reaction 1,2-di-(9Z,12Z-octadecadienoyl)-sn-glycero-3-phosphocholine + H2O = 2-(9Z,12Z-octadecadienoyl)-sn-glycero-3-phosphocholine + (9Z,12Z)-octadecadienoate + H(+). It carries out the reaction 1-(9Z-octadecenoyl)-2-hexadecanoyl-sn-glycero-3-phosphocholine + H2O = 2-hexadecanoyl-sn-glycero-3-phosphocholine + (9Z)-octadecenoate + H(+). Sn-1-specific phospholipase A1 that catalyzes the initial step of oxylipins and jasmonate (JA) biosynthesis. Hydrolyzes polyunsaturated acyl groups preferentially from chloroplastic monogalactosyldiacylglycerol (MGDG). May function downstream of abscisic acid (ABA) and provide a link between ABA-mediated abiotic stress responses and oxylipin and JA signalings. In vitro, possesses broad substrate specificity. Can hydrolyze the galactolipids monogalactosyldiacylglycerol (MGDG) and digalactosyldiacylglycerol (DGDG), the sulfolipid sulfoquinovosyldiacylglycerol (SQDG), and the phoshpolipids phosphatidylcholine (PC), and phosphatidylglycerol (PG). The protein is Phospholipase A1 PLIP2, chloroplastic of Arabidopsis thaliana (Mouse-ear cress).